The following is a 262-amino-acid chain: Aminoglycoside (3'') (9) adenylyltransferase (262 aa).

It catalyses the reaction streptomycin + ATP = 3''-O-adenylylstreptomycin + diphosphate. The catalysed reaction is spectinomycin + ATP = 9-O-adenylylspectinomycin + diphosphate. In terms of biological role, mediates bacterial resistance to the antibiotics streptomycin and spectinomycin. The polypeptide is Aminoglycoside (3'') (9) adenylyltransferase (Klebsiella pneumoniae).